The chain runs to 307 residues: UDP-3-O-acyl-N-acetylglucosamine deacetylase (307 aa).

3 residues coordinate Zn(2+): His-80, His-239, and Asp-243. The Proton donor role is filled by His-266.

It belongs to the LpxC family. The cofactor is Zn(2+).

It catalyses the reaction a UDP-3-O-[(3R)-3-hydroxyacyl]-N-acetyl-alpha-D-glucosamine + H2O = a UDP-3-O-[(3R)-3-hydroxyacyl]-alpha-D-glucosamine + acetate. The protein operates within glycolipid biosynthesis; lipid IV(A) biosynthesis; lipid IV(A) from (3R)-3-hydroxytetradecanoyl-[acyl-carrier-protein] and UDP-N-acetyl-alpha-D-glucosamine: step 2/6. Its function is as follows. Catalyzes the hydrolysis of UDP-3-O-myristoyl-N-acetylglucosamine to form UDP-3-O-myristoylglucosamine and acetate, the committed step in lipid A biosynthesis. In Neisseria meningitidis serogroup C / serotype 2a (strain ATCC 700532 / DSM 15464 / FAM18), this protein is UDP-3-O-acyl-N-acetylglucosamine deacetylase.